We begin with the raw amino-acid sequence, 1097 residues long: Putative regulator of nonsense transcripts 1 (1097 aa).

Residues 42-53 (SQTQTQGHTQSQ) are compositionally biased toward low complexity. Residues 42–67 (SQTQTQGHTQSQLDNQLNGPDDGLHN) form a disordered region. The Upf1 CH-rich domain maps to 96–254 (TKDLPVHACR…NKLEELWKDN (159 aa)). Cys-104, Cys-108, Cys-119, Ser-122, Cys-127, His-137, His-141, Cys-147, Cys-165, Cys-168, Cys-191, and Cys-195 together coordinate Zn(2+). Positions 104-137 (CRSYCGIHDPACVVYCNTSKKWFCNGRGNTSGSH) are C3H. The CC/SHH/C stretch occupies residues 119–147 (CNTSKKWFCNGRGNTSGSHIVNHLVRAKC). The segment at 165–195 (CYNCGCRNVFLLGFIPAKADSVVVLLCRQPC) is C4. ATP contacts are provided by residues Gln-457, 474 to 481 (GPPGTGKT), Tyr-683, and Glu-813. The disordered stretch occupies residues 977-998 (QGQTNGPAAGRGAMKGKSGRGG).

This sequence belongs to the DNA2/NAM7 helicase family.

It is found in the cytoplasm. The protein localises to the P-body. The catalysed reaction is ATP + H2O = ADP + phosphate + H(+). RNA-dependent helicase required for nonsense-mediated decay (NMD) of aberrant mRNAs containing premature stop codons and modulates the expression level of normal mRNAs. The formation of an rent1-rent2-rent3 surveillance complex is believed to activate NMD. The polypeptide is Putative regulator of nonsense transcripts 1 (rent1) (Takifugu rubripes (Japanese pufferfish)).